The sequence spans 578 residues: Probable arginine--tRNA ligase, mitochondrial (578 aa).

The transit peptide at 1–16 (MACGFRRSIASQLSRV) directs the protein to the mitochondrion. Residues 133–135 (SPN), H144, Y322, D326, and Q350 contribute to the L-arginine site. The 'HIGH' region signature appears at 133 to 144 (SPNVAKKFHVGH). An N6-acetyllysine modification is found at K568.

The protein belongs to the class-I aminoacyl-tRNA synthetase family.

It localises to the mitochondrion membrane. The catalysed reaction is tRNA(Arg) + L-arginine + ATP = L-arginyl-tRNA(Arg) + AMP + diphosphate. Functionally, catalyzes the attachment of arginine to tRNA(Arg) in a two-step reaction: arginine is first activated by ATP to form Arg-AMP and then transferred to the acceptor end of tRNA(Arg). The sequence is that of Probable arginine--tRNA ligase, mitochondrial (RARS2) from Bos taurus (Bovine).